The primary structure comprises 539 residues: Cytochrome P450 monooxygenase tenB (539 aa).

A helical membrane pass occupies residues 13-33 (LGYYEKVAGVLGFLSIALLFW). Positions 439–460 (PFRFSRASKDDDDDGKSTSSHA) are disordered. Residue C481 participates in heme binding.

Belongs to the cytochrome P450 family. Requires heme as cofactor.

The protein localises to the membrane. Its pathway is secondary metabolite biosynthesis. Cytochrome P450 monooxygenase; part of the gene cluster that mediates the biosynthesis of tenellin-type 2-pyridones, iron-chelating compounds involved in iron stress tolerance, competition with the natural competitor fungus Metarhizium robertsii and insect hosts infection. TenB catalyzes the selective N-hydroxylation of the 2-pyridone nitrogen of yield tellinin and 15-hydroxytellenin (15-HT), respectively. The pathway begins with the assembly of the polyketide-amino acid backbone by the hybrid PKS-NRPS tenS with the help of the enoyl reductase tenC. These enzymes catalyze the synthesis of the pyrrolidine-2-dione intermediates pretellinin A, 11-hydropretellenin A, 12-hydropretellenin A, 13-hydropretellenin A, 14-hydropretellenin A, 12-oxopretellenin A and prototellinin D. The cytochrome P450 monooxygenase tenA then catalyzes an oxidative ring expansion of pretenellin A and 14-hydropretellenin A to form the 2-pyridone core, leading to pretenellin B and pyridovericin, respectively. The cytochrome P450 monooxygenase tenB is then required for the selective N-hydroxylation of the 2-pyridone nitrogen of yield tellinin and 15-hydroxytellenin (15-HT), respectively. The UDP-glucosyltransferase GT1 and the methyltransferase MT1, located outside the tenS gene cluster, contribute to the stepwise glycosylation and methylation of 15-HT to obtain the glycoside pyridovericin-N-O-(4-O-methyl-beta-D-glucopyranoside) (PMGP). Additional related compounds such as 1-O-methyl-15-HT, (8Z)-1-O-methyl-15-HT, and O-methyltenellin A are also produced but the enzymes involved in their biosynthesis have still to be determined. The sequence is that of Cytochrome P450 monooxygenase tenB from Beauveria bassiana (White muscardine disease fungus).